Reading from the N-terminus, the 305-residue chain is Protoheme IX farnesyltransferase (305 aa).

The next 9 helical transmembrane spans lie at 31–51 (VMSL…YSVH), 52–72 (PFIA…AGAI), 96–118 (VIES…FFMA), 122–144 (NLLA…TIWL), 151–171 (NIVI…AAVS), 180–200 (ILFL…ALFC), 225–245 (ILIY…IGMN), 247–267 (FIYL…AGSL), and 281–301 (FAYS…TNTI).

Belongs to the UbiA prenyltransferase family. Protoheme IX farnesyltransferase subfamily.

It localises to the cell inner membrane. The enzyme catalyses heme b + (2E,6E)-farnesyl diphosphate + H2O = Fe(II)-heme o + diphosphate. It participates in porphyrin-containing compound metabolism; heme O biosynthesis; heme O from protoheme: step 1/1. Its function is as follows. Converts heme B (protoheme IX) to heme O by substitution of the vinyl group on carbon 2 of heme B porphyrin ring with a hydroxyethyl farnesyl side group. In Rickettsia peacockii (strain Rustic), this protein is Protoheme IX farnesyltransferase.